Here is a 307-residue protein sequence, read N- to C-terminus: Nitric oxide synthase-interacting protein homolog (307 aa).

The disordered stretch occupies residues 120–159 (PAMTPAHSSAAASEKPSTSSAAAAASSESSSASSISNMTN). Positions 127–155 (SSAAASEKPSTSSAAAAASSESSSASSIS) are enriched in low complexity.

It belongs to the NOSIP family.

Its subcellular location is the cytoplasm. It is found in the nucleus. Functionally, negatively regulates nitric oxide production by inducing nitric oxide synthase translocation to actin cytoskeleton and inhibiting its enzymatic activity. The polypeptide is Nitric oxide synthase-interacting protein homolog (Drosophila melanogaster (Fruit fly)).